Here is a 356-residue protein sequence, read N- to C-terminus: Replication factor C subunit 3 (356 aa).

Residue Lys20 is modified to N6-acetyllysine. Phosphoserine is present on Ser125.

Belongs to the activator 1 small subunits family. Subunit of the RFC complex, an heteropentameric complex consisting of a large subunit RFC1 and four small subunits RFC2, RFC3, RFC4 and RFC5; the RFC complex interacts with PCNA. Forms an heterotetrameric complex with RFC2, RFC4 and RFC5; this complex has ATPase activity but is not stimulated by PCNA. The heterotetramer of subunits RFC2, RFC3, RFC4 and RFC5 interacts with RAD17. Interacts with CNTD1; this interaction facilitates crossover formation.

The protein resides in the nucleus. Functionally, subunit of the replication factor C (RFC) complex which acts during elongation of primed DNA templates by DNA polymerases delta and epsilon, and is necessary for ATP-dependent loading of proliferating cell nuclear antigen (PCNA) onto primed DNA. The protein is Replication factor C subunit 3 (RFC3) of Homo sapiens (Human).